Reading from the N-terminus, the 145-residue chain is QPEEPRCRETPETWSGVLYIISVRNTEVLFTISSSSYDRTEQKIKITMVKSMTNQPLKTVLDDYEKRIRYCKNETLEGELPSFGVPENAHFDGPVETLGAKIAGLGVTVAHYTIAERGFSYFTYHPLGDEGTQCIPITNSIATLD.

An N-linked (GlcNAc...) asparagine glycan is attached at asparagine 73.

As to quaternary structure, probable heterotrimer consisting of an alpha chain and two beta chains. The alpha chain can probably have different glycosylation states. In terms of processing, glycosylated.

Functionally, lectin with affinity for N-acetyl-galactosamine, carragenan and glycoprotein porcine stomach mucin (PSM). Has metal-independent hemagglutinating activity towards erythrocytes from rabbit and human. Hemagglutinating activity is not inhibited by D-galactose, D-glucose, D-mannose, D-fucose, methyl-alpha-D-galactopyranoside, methyl-alpha-D-glucopyranoside, N-acetyl-glucosamine, N-acetyl-mannosamine, D-fructose, alpha-D-lactose, beta-D-lactose, D-lactulose, D-sucrose, fucoidan or glycoproteins thyroglobulin and ovalmucoid. The chain is Halilectin 3, alpha chain from Haliclona caerulea (Blue Caribbean sponge).